The following is a 121-amino-acid chain: MARIAGVDIPRDKRIEVALTYIYGIGLTRAQTILSKTGVNPDTRVKDLEDGDVQKLRGATEAFTIEGDLRRQEGMALKRLQDIGCVRGRRHRMSLPVRGQRTRTNARTRRGARKTVAGKKK.

The disordered stretch occupies residues 97–121 (VRGQRTRTNARTRRGARKTVAGKKK). A compositionally biased stretch (basic residues) spans 100–121 (QRTRTNARTRRGARKTVAGKKK).

It belongs to the universal ribosomal protein uS13 family. As to quaternary structure, part of the 30S ribosomal subunit. Forms a loose heterodimer with protein S19. Forms two bridges to the 50S subunit in the 70S ribosome.

Its function is as follows. Located at the top of the head of the 30S subunit, it contacts several helices of the 16S rRNA. In the 70S ribosome it contacts the 23S rRNA (bridge B1a) and protein L5 of the 50S subunit (bridge B1b), connecting the 2 subunits; these bridges are implicated in subunit movement. Contacts the tRNAs in the A and P-sites. The polypeptide is Small ribosomal subunit protein uS13 (Synechococcus sp. (strain WH7803)).